A 100-amino-acid chain; its full sequence is Urease subunit gamma (100 aa).

It belongs to the urease gamma subunit family. In terms of assembly, heterotrimer of UreA (gamma), UreB (beta) and UreC (alpha) subunits. Three heterotrimers associate to form the active enzyme.

Its subcellular location is the cytoplasm. The catalysed reaction is urea + 2 H2O + H(+) = hydrogencarbonate + 2 NH4(+). The protein operates within nitrogen metabolism; urea degradation; CO(2) and NH(3) from urea (urease route): step 1/1. The chain is Urease subunit gamma from Streptomyces avermitilis (strain ATCC 31267 / DSM 46492 / JCM 5070 / NBRC 14893 / NCIMB 12804 / NRRL 8165 / MA-4680).